The following is a 250-amino-acid chain: Ribonuclease HII (250 aa).

In terms of domain architecture, RNase H type-2 spans 66-250 (QLVAGVDEVG…SFAPVSEYEK (185 aa)). 3 residues coordinate a divalent metal cation: aspartate 72, glutamate 73, and aspartate 164.

It belongs to the RNase HII family. Mn(2+) is required as a cofactor. Mg(2+) serves as cofactor.

The protein resides in the cytoplasm. It catalyses the reaction Endonucleolytic cleavage to 5'-phosphomonoester.. Functionally, endonuclease that specifically degrades the RNA of RNA-DNA hybrids. The polypeptide is Ribonuclease HII (Lactobacillus johnsonii (strain CNCM I-12250 / La1 / NCC 533)).